Consider the following 13477-residue polypeptide: Mucin-3B (13477 aa).

The signal sequence occupies residues 1–21 (MQLLGLLSILWMLKSSPGATG). A compositionally biased stretch (low complexity) spans 219-234 (TISSTTRTTERTPLPT). 106 disordered regions span residues 219–243 (TISS…TMSP), 327–347 (TRST…TVTD), 360–383 (GTLS…TPMT), 513–559 (SMTT…PSTL), 622–643 (ATTP…STPS), 815–839 (TTTN…TGTG), 923–968 (TSQT…STTE), 1154–1179 (PSMS…TSTL), 1480–1511 (SPTV…STEN), 1529–1601 (SISA…FPET), 1619–1638 (MTST…VTSM), 1692–1714 (TTST…TDSM), 1944–1968 (TTSA…TFTS), 2064–2123 (TPNA…IAKS), 2170–2197 (STSM…SGGI), 2275–2308 (SSSM…AEST), 2442–2462 (RSTP…VKGS), 2476–2497 (LSME…TATT), 2509–2537 (SHST…GPPT), 2591–2610 (SAMS…TETS), 2672–2717 (TSTL…FSSS), 2812–2832 (TTIT…STST), 2845–2867 (TMTE…STTE), 2922–2947 (SRIP…SVGI), 3074–3109 (ETPS…TPDI), 3309–3395 (TTSH…NSNS), 3420–3481 (ITTT…SHST), 3545–3565 (STTS…STPS), 3654–3727 (SITT…STTA), 3740–3812 (ITTI…TTAE), 4014–4047 (TETT…SIAT), 4067–4106 (TSNS…HSTP), 4182–4249 (TTET…SSIT), 4269–4313 (NSTS…PSFT), 4510–4530 (SHST…SHST), 4557–4617 (TETT…STSS), 4630–4651 (YSPS…STPS), 4802–4830 (TSSF…TATG), 4953–4986 (HSLP…KTIS), 5128–5203 (YTSS…ITTT), 5455–5486 (ITNT…PSFT), 5627–5680 (TTKT…ATSK), 5834–5908 (TTSY…HSPP), 5957–5977 (STPS…SSPS), 5990–6017 (HSTA…SSIT), 6030–6080 (TSSI…PPIF), 6120–6150 (TTET…SFTS), 6172–6197 (TEST…HTPP), 6456–6481 (TETP…HSTP), 6541–6598 (TKTT…TSTS), 6846–6867 (TTGT…TKTT), 6946–6971 (ITTT…RTSH), 6999–7021 (TTES…ETRS), 7067–7093 (TTET…HSPP), 7170–7206 (TETA…TTGI), 7225–7244 (SHST…ISHS), 7299–7329 (FTSS…TSHS), 7400–7433 (SYTS…HRTP), 7476–7532 (TETI…TTST), 7578–7600 (TGTS…TTSH), 7731–7766 (TEIT…ATSK), 7922–7996 (SHST…PPIF), 8036–8066 (TTET…SFTS), 8088–8113 (TEST…HTPP), 8372–8397 (TETP…HSTP), 8457–8514 (TKTT…TSTS), 8762–8783 (TTGT…TKTT), 8862–8887 (ITTT…RTSH), 8915–8941 (TTES…HSPP), 8983–9009 (TTET…HSPP), 9052–9122 (AETT…TTGI), 9141–9160 (SHST…ISHS), 9215–9240 (FTSS…TSTE), 9335–9366 (TSSI…HRTP), 9409–9465 (TETI…TTST), 9566–9589 (SHST…NPSL), 9612–9674 (TTET…PPSF), 9734–9760 (TTSH…SSFT), 9828–9859 (TSSI…HSTP), 9883–9908 (TTTE…RSHS), 9921–9973 (TTSH…SKTI), 10076–10099 (SDST…SPSF), 10120–10166 (ITTT…TVPS), 10189–10285 (ITTE…SPLS), 10389–10425 (TSSI…LSSA), 10462–10481 (TTKT…TSTK), 10501–10537 (SHSS…TSTS), 10640–10660 (TTSF…TPSF), 10750–10828 (TTTE…QRSP), 10887–11032 (TTET…SPSS), 11044–11065 (SHST…HSTP), 11276–11317 (TGTE…SPSH), 11446–11482 (STTA…ITTT), 11566–11697 (TTET…PGFS), 11754–11779 (TKTT…HSTP), 11818–11949 (SIAT…HSPP), 12067–12103 (TSSF…STPV), 12186–12220 (PSYT…HSTP), 12280–12323 (TETT…STPI), 12364–12452 (TTET…TTET), 12468–12578 (EMTS…NTPS), 12616–12639 (FTTA…DIPT), 12681–12700 (SSPS…TSPT), 12785–12805 (IPST…LQTS), 12985–13011 (TSSM…TVPT), and 13052–13086 (SLPT…TPTT). 2 stretches are compositionally biased toward low complexity: residues 513–538 (SMTT…LSST) and 547–559 (TSHT…PSTL). Low complexity predominate over residues 1620-1638 (TSTPPITSSVTPTNTVTSM). The span at 1944–1956 (TTSATMEPPSSSV) shows a compositional bias: polar residues. The span at 1957–1968 (AATDTGQTTFTS) shows a compositional bias: low complexity. Positions 2066–2091 (NASSMTTSETTYPNSPTGPVTNSMSK) are enriched in polar residues. The segment covering 2096 to 2107 (ASMTQTSSTATS) has biased composition (low complexity). Residues 2113–2123 (PSGSTTEIAKS) are compositionally biased toward polar residues. The span at 2170-2185 (STSMTPSTVSTSIPTS) shows a compositional bias: low complexity. The span at 2186–2195 (QPKTVNSSSG) shows a compositional bias: polar residues. 2 stretches are compositionally biased toward low complexity: residues 2292–2308 (SSPP…AEST) and 2442–2458 (RSTP…PTST). Residues 2591 to 2603 (SAMSTSDIPSSPS) show a composition bias toward low complexity. Low complexity-rich tracts occupy residues 2929 to 2944 (STDI…TPSS) and 3074 to 3097 (ETPS…TATS). A compositionally biased stretch (polar residues) spans 3098 to 3109 (PETNTLTPTPDI). Low complexity predominate over residues 3309–3359 (TTSHSTPSFTSPIATTKTSSHSSPSFTSSIATLETTSHSTPSFTSSITTNS). Residues 3360–3370 (HSTPRFSSSIA) show a composition bias toward polar residues. Positions 3371–3385 (TRETTSHSTSSFTPS) are enriched in low complexity. The segment covering 3386-3395 (IATTKTNSNS) has biased composition (polar residues). Residues 3420–3452 (ITTTETTSHSTPSFTSSMATTKTTSHSTPSFTS) show a composition bias toward low complexity. Positions 3453 to 3462 (PIATRETTSH) are enriched in polar residues. The segment covering 3463 to 3481 (STPSFTSLITTTKTTSHST) has biased composition (low complexity). A compositionally biased stretch (polar residues) spans 3740–3749 (ITTIETPSHG). The segment covering 3750–3785 (TPSFTSSITSTETTSHSSPSFISSITTTEITSHSTP) has biased composition (low complexity). The segment covering 3786-3812 (RFTSSITTMETPSHSTPNFTSSITTAE) has biased composition (polar residues). Low complexity-rich tracts occupy residues 4020-4042 (STPS…PSFT) and 4067-4096 (TSNS…SSMT). Over residues 4097-4106 (ATETTSHSTP) the composition is skewed to polar residues. Composition is skewed to low complexity over residues 4182–4228 (TTET…PSFT) and 4237–4249 (TSHS…SSIT). Residues 4557–4574 (TETTSNSSPSFTSSITNT) show a composition bias toward low complexity. A compositionally biased stretch (polar residues) spans 4575-4601 (KTTSYSPPGFTSSIPATETTSRSPPGF). Residues 4602–4617 (TSSITTTETTSHSTSS) show a composition bias toward low complexity. Low complexity predominate over residues 4802–4827 (TSSFTSSITSTETTSHSTPSLTSSIT). A compositionally biased stretch (low complexity) spans 5137–5158 (TPSHITPSFTSTITTSESTSHS). Residues 5159–5170 (NPSLTSAITTTE) are compositionally biased toward polar residues. 2 stretches are compositionally biased toward low complexity: residues 5174 to 5203 (HSPP…ITTT) and 5458 to 5486 (TEST…PSFT). Over residues 5834–5858 (TTSYSTPSITSSITTTERTSHSTPS) the composition is skewed to low complexity. The span at 5859–5874 (YTSSIATRETPSHTVP) shows a compositional bias: polar residues. Residues 5875-5889 (SFTSSITTTESTSHS) are compositionally biased toward low complexity. A compositionally biased stretch (polar residues) spans 5890 to 5901 (NPSLTSAITTTE). Over residues 6045–6059 (SFTSSITTTDSTSHS) the composition is skewed to low complexity. The span at 6060 to 6071 (NPSLTSAITTTE) shows a compositional bias: polar residues. A compositionally biased stretch (low complexity) spans 6172–6185 (TESTSHSTPSFTSS). Residues 6186 to 6197 (IATTETTSHTPP) are compositionally biased toward polar residues. The span at 6456 to 6475 (TETPSHSTPSFPSSITTTQS) shows a compositional bias: low complexity. Polar residues predominate over residues 6852–6867 (HNTLGLSSSVDTTKTT). Residues 6946 to 6965 (ITTTETTSHSTPSITSSVTT) show a composition bias toward low complexity. Positions 6999–7018 (TTESTSHSNPSLTSAITTTE) are enriched in polar residues. Low complexity predominate over residues 7172–7206 (TASHSNPSSTSSITTTESTSHSPPRSTSAIATTGI). 2 stretches are compositionally biased toward low complexity: residues 7300-7329 (TSSI…TSHS) and 7400-7427 (SYTS…STET). Polar residues predominate over residues 7476–7491 (TETISHSPPSFTSLTN). Residues 7492 to 7532 (STETTSHSPPSFTSSSTTTETPSHSTPGFSSSIATSKTTST) are compositionally biased toward low complexity. 2 stretches are compositionally biased toward low complexity: residues 7734 to 7766 (TSHS…ATSK) and 7922 to 7944 (SHST…STPS). Over residues 7945-7987 (YTSSIATSETPSHTVPSFTSLITTTDSTSHSNPSLTSAITTTE) the composition is skewed to polar residues. Residues 8088-8101 (TESTSHSTPSFTSS) are compositionally biased toward low complexity. Residues 8102–8113 (IATTETTSHTPP) are compositionally biased toward polar residues. Residues 8372-8391 (TETPSHSTPSFPSSITTTQS) show a composition bias toward low complexity. Polar residues predominate over residues 8768–8783 (HNTLGLSSSVDTTKTT). The span at 8862-8881 (ITTTETTSHSTPSITSSVTT) shows a compositional bias: low complexity. A compositionally biased stretch (polar residues) spans 8915–8934 (TTESTSHSNPSLTSAITTTE). Low complexity-rich tracts occupy residues 9067–9081 (PTTE…SFTS) and 9088–9122 (TASH…TTGI). Low complexity predominate over residues 9335 to 9360 (TSSITTTETPSHSSPSFPSSITSTET). Positions 9409 to 9424 (TETISHSPPSFTSLTN) are enriched in polar residues. Low complexity-rich tracts occupy residues 9425 to 9465 (STET…TTST), 9566 to 9585 (SHST…TSHS), and 9612 to 9624 (TTET…PSFT). Residues 9625 to 9661 (SSIATAETTSHSPPSFTSLITTSETPSHSNPSFTSLI) are compositionally biased toward polar residues. Positions 9662–9674 (TTTESTSHSPPSF) are enriched in low complexity. 2 stretches are compositionally biased toward polar residues: residues 9892-9903 (NPSLTSAITNTE) and 9921-9933 (TTSH…TSLI). The span at 9934-9973 (TSTETTSHSPPSFTSSSTTTETPSHSTPGFSSSIATSKTI) shows a compositional bias: low complexity. Positions 10120-10130 (ITTTETTSHST) are enriched in low complexity. Residues 10131 to 10166 (PNITSSVTTTERTSHSTPSYTSSIATGETPSHTVPS) show a composition bias toward polar residues. Low complexity-rich tracts occupy residues 10196-10271 (HSPP…SFTS) and 10394-10421 (TSET…STPS). Polar residues predominate over residues 10750–10791 (TTTETTSHSPPRFTSSITTTKTPSDSTPVFTPSIATSETSSH). 3 stretches are compositionally biased toward low complexity: residues 10792 to 10828 (STPG…QRSP), 10887 to 10937 (TTET…SSIT), and 10950 to 11032 (PSSI…SPSS). Residues 11278 to 11291 (TETTSHSPPHFTSS) show a composition bias toward low complexity. The segment covering 11292-11317 (ITRTKTTSHRPPTFTSSITTTESPSH) has biased composition (polar residues). The span at 11566-11682 (TTETTSHSIP…SHSTSGFTSS (117 aa)) shows a compositional bias: low complexity. Polar residues-rich tracts occupy residues 11683–11697 (NATT…PGFS) and 11754–11769 (TKTT…SSIA). Low complexity-rich tracts occupy residues 11770–11779 (STKTTSHSTP) and 11818–11880 (SIAT…SHST). 2 stretches are compositionally biased toward polar residues: residues 11881 to 11896 (PSFT…TSHS) and 11903 to 11912 (LIPTTKTTLH). Low complexity-rich tracts occupy residues 11913-11949 (SPPS…HSPP) and 12067-12091 (TSSF…TSSI). Over residues 12092 to 12103 (AVTETPSDSTPV) the composition is skewed to polar residues. Residues 12280–12309 (TETTSHSAPNFSSSITSTETTSHSTPSFTS) show a composition bias toward low complexity. Polar residues predominate over residues 12310–12323 (AITSTETTSHSTPI). Positions 12364–12412 (TTETTSHSTPGFASSITTTKTTSHSTPSFTSSIATSNTTSSSTPGFTSS) are enriched in low complexity. Over residues 12413–12439 (IATTETTSRSTPGFTSSIVTTETTSPH) the composition is skewed to polar residues. The segment covering 12440 to 12452 (TPGFTSSITTTET) has biased composition (low complexity). Over residues 12468-12477 (EMTSHSTPSL) the composition is skewed to polar residues. 6 stretches are compositionally biased toward low complexity: residues 12478–12569 (TFSI…VTTP), 12624–12639 (TSTP…DIPT), 12681–12692 (SSPSIQSTETSS), 12794–12805 (QTTPSIPSLQTS), 12990–13003 (PESE…ASSS), and 13073–13086 (TSET…TPTT). One can recognise an EGF-like domain in the interval 13130–13163 (SGDRCQLQTRCQNGGQWDGLKCQCPSTFYGSSCE). Disulfide bonds link C13134-C13140 and C13153-C13162. An SEA domain is found at 13172-13297 (DVVETEVGME…DSIKVNNNSK (126 aa)). A helical transmembrane segment spans residues 13381 to 13401 (LVGGLTAGAALLVLLLLALGV).

In terms of processing, highly O-glycosylated and probably also N-glycosylated. In terms of tissue distribution, fetal and adult small intestine and fetal and adult colon.

The protein localises to the membrane. Its function is as follows. Major glycoprotein component of a variety of mucus gels. Thought to provide a protective, lubricating barrier against particles and infectious agents at mucosal surfaces. The sequence is that of Mucin-3B from Homo sapiens (Human).